Here is a 175-residue protein sequence, read N- to C-terminus: Gamma-crystallin A (175 aa).

2 Beta/gamma crystallin 'Greek key' domains span residues 2 to 40 and 41 to 83; these read GKIT…RVDV and HSWF…RLIP. The connecting peptide stretch occupies residues 84–88; sequence QHTGT. Beta/gamma crystallin 'Greek key' domains lie at 89–129 and 130–172; these read FRMR…RVLE and GSWV…RRVM.

This sequence belongs to the beta/gamma-crystallin family.

In terms of biological role, crystallins are the dominant structural components of the vertebrate eye lens. This is Gamma-crystallin A (CRYGA) from Bos taurus (Bovine).